A 217-amino-acid chain; its full sequence is 2-C-methyl-D-erythritol 4-phosphate cytidylyltransferase (217 aa).

This sequence belongs to the IspD/TarI cytidylyltransferase family. IspD subfamily.

The enzyme catalyses 2-C-methyl-D-erythritol 4-phosphate + CTP + H(+) = 4-CDP-2-C-methyl-D-erythritol + diphosphate. Its pathway is isoprenoid biosynthesis; isopentenyl diphosphate biosynthesis via DXP pathway; isopentenyl diphosphate from 1-deoxy-D-xylulose 5-phosphate: step 2/6. Its function is as follows. Catalyzes the formation of 4-diphosphocytidyl-2-C-methyl-D-erythritol from CTP and 2-C-methyl-D-erythritol 4-phosphate (MEP). This is 2-C-methyl-D-erythritol 4-phosphate cytidylyltransferase from Chlamydia abortus (strain DSM 27085 / S26/3) (Chlamydophila abortus).